Here is a 174-residue protein sequence, read N- to C-terminus: Chorismate pyruvate-lyase (174 aa).

Substrate contacts are provided by Met36, Arg78, Leu116, and Glu157.

It belongs to the UbiC family. Monomer.

The protein resides in the cytoplasm. It catalyses the reaction chorismate = 4-hydroxybenzoate + pyruvate. Its pathway is cofactor biosynthesis; ubiquinone biosynthesis. Functionally, removes the pyruvyl group from chorismate, with concomitant aromatization of the ring, to provide 4-hydroxybenzoate (4HB) for the ubiquinone pathway. This Yersinia pestis bv. Antiqua (strain Angola) protein is Chorismate pyruvate-lyase.